The following is a 420-amino-acid chain: Transmembrane protease serine 11B-like protein (420 aa).

The Cytoplasmic segment spans residues 1-19 (MTVSKLRPVIASRKSFPPW). A helical; Signal-anchor for type II membrane protein membrane pass occupies residues 20 to 40 (MIILGVLGVLAILGLIIGLLV). Residues 41-420 (HFLAVENKIY…RDWIASKTGI (380 aa)) lie on the Extracellular side of the membrane. In terms of domain architecture, SEA spans 48–165 (KIYYYQGSFK…GSLKLTEITK (118 aa)). N-linked (GlcNAc...) asparagine glycosylation is found at asparagine 111 and asparagine 146. One can recognise a Peptidase S1 domain in the interval 189–419 (ITGGSTAQKG…YRDWIASKTG (231 aa)). The cysteines at positions 214 and 230 are disulfide-linked. Catalysis depends on histidine 229, which acts as the Charge relay system. An N-linked (GlcNAc...) asparagine glycan is attached at asparagine 239. Aspartate 274 serves as the catalytic Charge relay system. Intrachain disulfides connect cysteine 339/cysteine 355 and cysteine 366/cysteine 395. The active-site Charge relay system is the serine 370.

It belongs to the peptidase S1 family.

The protein resides in the membrane. It is found in the cell membrane. With respect to regulation, inhibited by aprotinin, leupeptin, benzamidine, SERPINA1, SPINT1 and SPINT2. Serine protease. The polypeptide is Transmembrane protease serine 11B-like protein (Tmprss11bnl) (Rattus norvegicus (Rat)).